The following is a 360-amino-acid chain: Phenylalanine--tRNA ligase alpha subunit (360 aa).

Glu-255 contacts Mg(2+).

This sequence belongs to the class-II aminoacyl-tRNA synthetase family. Phe-tRNA synthetase alpha subunit type 1 subfamily. In terms of assembly, tetramer of two alpha and two beta subunits. Mg(2+) serves as cofactor.

Its subcellular location is the cytoplasm. It carries out the reaction tRNA(Phe) + L-phenylalanine + ATP = L-phenylalanyl-tRNA(Phe) + AMP + diphosphate + H(+). This is Phenylalanine--tRNA ligase alpha subunit from Rhizorhabdus wittichii (strain DSM 6014 / CCUG 31198 / JCM 15750 / NBRC 105917 / EY 4224 / RW1) (Sphingomonas wittichii).